A 437-amino-acid chain; its full sequence is Vasoactive intestinal polypeptide receptor 2 (437 aa).

An N-terminal signal peptide occupies residues 1-22; the sequence is MRASVVLTCYCWLLVRVSSIHP. The Extracellular segment spans residues 23–123; the sequence is ECRFHLEIQE…EDESKITFYI (101 aa). 3 disulfide bridges follow: cysteine 37–cysteine 60, cysteine 51–cysteine 92, and cysteine 74–cysteine 108. N-linked (GlcNAc...) asparagine glycans are attached at residues asparagine 57, asparagine 87, and asparagine 91. The helical transmembrane segment at 124–149 threads the bilayer; that stretch reads LVKAIYTLGYSVSLMSLTTGSIIICL. The Cytoplasmic portion of the chain corresponds to 150–157; it reads FRKLHCTR. Residues 158-179 form a helical membrane-spanning segment; that stretch reads NYIHLNLFLSFMLRAISVLVKD. Residues 180–202 are Extracellular-facing; that stretch reads SVLYSSSGTLRCHDQPGSWVGCK. A disulfide bond links cysteine 201 and cysteine 270. Residues 203-227 form a helical membrane-spanning segment; it reads LSLVFFQYCIMANFYWLLVEGLYLH. Residues 228-238 lie on the Cytoplasmic side of the membrane; the sequence is TLLVAILPPSR. The chain crosses the membrane as a helical span at residues 239–260; the sequence is CFLAYLLIGWGIPSVCIGAWIA. Over 261–279 the chain is Extracellular; sequence TRLSLEDTGCWDTNDHSIP. Residues 280 to 303 traverse the membrane as a helical segment; sequence WWVIRMPILISIVVNFALFISIVR. The Cytoplasmic portion of the chain corresponds to 304–324; the sequence is ILLQKLTSPDVGGNDQSQYKR. A helical membrane pass occupies residues 325–345; sequence LAKSTLLLIPLFGVHYMVFAA. Residues 346–353 are Extracellular-facing; it reads FPIGISST. Residues 354–377 traverse the membrane as a helical segment; that stretch reads YQILFELCVGSFQGLVVAVLYCFL. Over 378-437 the chain is Cytoplasmic; it reads NSEVQCELKRRWRGLCLTQPGSRDYRLHSWSMSRNGSESALQIHRGSRTQSFLQSETSVI.

Belongs to the G-protein coupled receptor 2 family. Interacts with ADCYAP1/PACAP (via N-terminal extracellular domain); activated by PACAP27 and CAPAC38 neuropeptides. Interacts with VIP; the interaction results in VIPR1 activation. In terms of tissue distribution, mainly in the thalamus, hippocampus and in the suprachiasmatic nucleus.

The protein resides in the cell membrane. G protein-coupled receptor activated by the neuropeptides vasoactive intestinal peptide (VIP) and pituitary adenylate cyclase-activating polypeptide (ADCYAP1/PACAP). Binds VIP and both PACAP27 and PACAP38 bioactive peptides with the order of ligand affinity of VIP = PACAP38 &gt; PACAP27. Ligand binding causes a conformation change that triggers signaling via guanine nucleotide-binding proteins (G proteins) and modulates the activity of downstream effectors. Activates cAMP-dependent pathway. May be coupled to phospholipase C. In Rattus norvegicus (Rat), this protein is Vasoactive intestinal polypeptide receptor 2.